The chain runs to 462 residues: Glycoprotein endo-alpha-1,2-mannosidase (462 aa).

At 1-8 (MAKFRRRT) the chain is on the cytoplasmic side. A helical; Signal-anchor for type II membrane protein membrane pass occupies residues 9–29 (CIILALFILFIFSLMMGLKML). Residues 30–462 (RPNTATFGAP…YALDRQLPVS (433 aa)) lie on the Lumenal side of the membrane. Residues 60–462 (DFQKSDRINS…YALDRQLPVS (403 aa)) are catalytic.

Belongs to the glycosyl hydrolase 99 family. In terms of processing, undergoes proteolytic cleavage in the C-terminal region. As to expression, highly expressed in the liver and kidney. Expressed at lower levels in muscle, pancreas, heart, placenta, lung and brain.

It is found in the golgi apparatus membrane. The enzyme catalyses N-{alpha-Glc-(1-&gt;3)-alpha-Man-(1-&gt;2)-alpha-Man-(1-&gt;2)-alpha-Man-(1-&gt;3)-[alpha-Man-(1-&gt;2)-alpha-Man-(1-&gt;3)-[alpha-Man-(1-&gt;2)-alpha-Man-(1-&gt;6)]-alpha-Man-(1-&gt;6)]-beta-Man-(1-&gt;4)-beta-GlcNAc-(1-&gt;4)-beta-GlcNAc}-L-asparaginyl-[protein] + H2O = alpha-D-glucosyl-(1-&gt;3)-D-mannopyranose + N(4)-{alpha-D-Man-(1-&gt;2)-alpha-D-Man-(1-&gt;3)-[alpha-D-Man-(1-&gt;2)-alpha-D-Man-(1-&gt;3)-[alpha-D-Man-(1-&gt;2)-alpha-D-Man-(1-&gt;6)]-alpha-D-Man-(1-&gt;6)]-beta-D-Man-(1-&gt;4)-beta-D-GlaNAc-(1-&gt;4)-beta-D-GlcNAc}-L-asparaginyl-[protein] (N-glucan mannose isomer 8A1,2,3B1,2). The protein is Glycoprotein endo-alpha-1,2-mannosidase (MANEA) of Homo sapiens (Human).